Here is a 468-residue protein sequence, read N- to C-terminus: Fibrinogen beta chain (468 aa).

Position 1 is a pyrrolidone carboxylic acid (Gln1). The segment covering 1–10 (QFPTDYDEGQ) has biased composition (acidic residues). The interval 1–54 (QFPTDYDEGQDDRPKVGLGARGHRPYDKKKEEAPSLRPVPPPISGGGYRARPAT) is disordered. O-linked (GalNAc...) threonine glycosylation occurs at Thr4. Residue Tyr6 is modified to Sulfotyrosine. Basic and acidic residues predominate over residues 24–34 (RPYDKKKEEAP). A coiled-coil region spans residues 88–204 (KLQDTLVRQE…TQMEYCRTPC (117 aa)). Disulfide bonds link Cys208-Cys293 and Cys218-Cys247. The Fibrinogen C-terminal domain occupies 209–465 (NIPVVSGKEC…KMSMKIRPYF (257 aa)). Asn371 is a glycosylation site (N-linked (GlcNAc...) asparagine). A disulfide bond links Cys401 and Cys414.

As to quaternary structure, heterohexamer; disulfide linked. Contains 2 sets of 3 non-identical chains (alpha, beta and gamma). The 2 heterotrimers are in head to head conformation with the N-termini in a small central domain. Conversion of fibrinogen to fibrin is triggered by thrombin, which cleaves fibrinopeptides A and B from alpha and beta chains, and thus exposes the N-terminal polymerization sites responsible for the formation of the soft clot. The soft clot is converted into the hard clot by factor XIIIA which catalyzes the epsilon-(gamma-glutamyl)lysine cross-linking between gamma chains (stronger) and between alpha chains (weaker) of different monomers. As to expression, detected in blood plasma (at protein level).

It localises to the secreted. Cleaved by the protease thrombin to yield monomers which, together with fibrinogen alpha (FGA) and fibrinogen gamma (FGG), polymerize to form an insoluble fibrin matrix. Fibrin has a major function in hemostasis as one of the primary components of blood clots. In addition, functions during the early stages of wound repair to stabilize the lesion and guide cell migration during re-epithelialization. Was originally thought to be essential for platelet aggregation, based on in vitro studies using anticoagulated blood. However subsequent studies have shown that it is not absolutely required for thrombus formation in vivo. Enhances expression of SELP in activated platelets. Maternal fibrinogen is essential for successful pregnancy. Fibrin deposition is also associated with infection, where it protects against IFNG-mediated hemorrhage. May also facilitate the antibacterial immune response via both innate and T-cell mediated pathways. The protein is Fibrinogen beta chain (FGB) of Bos taurus (Bovine).